A 498-amino-acid chain; its full sequence is Cytochrome P450 71B31 (498 aa).

A helical transmembrane segment spans residues 3 to 23; sequence MFLGLLFLFPLFFILFKNLLP. C441 provides a ligand contact to heme.

Belongs to the cytochrome P450 family. Heme serves as cofactor.

It localises to the membrane. In Arabidopsis thaliana (Mouse-ear cress), this protein is Cytochrome P450 71B31 (CYP71B31).